Reading from the N-terminus, the 349-residue chain is DNA replication and repair protein RecF (349 aa).

Position 30–37 (Gly30–Thr37) interacts with ATP.

This sequence belongs to the RecF family.

The protein localises to the cytoplasm. Functionally, the RecF protein is involved in DNA metabolism; it is required for DNA replication and normal SOS inducibility. RecF binds preferentially to single-stranded, linear DNA. It also seems to bind ATP. The sequence is that of DNA replication and repair protein RecF from Francisella tularensis subsp. novicida (strain U112).